The chain runs to 1220 residues: ATP-dependent helicase/nuclease subunit A (1220 aa).

The 465-residue stretch at 9 to 473 (VIWTDDQWKS…IDLSQNFRSR (465 aa)) folds into the UvrD-like helicase ATP-binding domain. 30–37 (AAAGSGKT) contributes to the ATP binding site. The UvrD-like helicase C-terminal domain maps to 474–782 (PEVLSTTNYL…RMMTIHASKG (309 aa)).

It belongs to the helicase family. AddA subfamily. Heterodimer of AddA and AddB/RexB. Mg(2+) is required as a cofactor.

The enzyme catalyses Couples ATP hydrolysis with the unwinding of duplex DNA by translocating in the 3'-5' direction.. It catalyses the reaction ATP + H2O = ADP + phosphate + H(+). Its function is as follows. The heterodimer acts as both an ATP-dependent DNA helicase and an ATP-dependent, dual-direction single-stranded exonuclease. Recognizes the chi site generating a DNA molecule suitable for the initiation of homologous recombination. The AddA nuclease domain is required for chi fragment generation; this subunit has the helicase and 3' -&gt; 5' nuclease activities. The chain is ATP-dependent helicase/nuclease subunit A from Staphylococcus carnosus (strain TM300).